Reading from the N-terminus, the 1377-residue chain is Pleckstrin homology-like domain family B member 1 (1377 aa).

The residue at position 51 (Ser-51) is a Phosphoserine. The region spanning 64 to 125 is the FHA domain; that stretch reads TVIGSAARDI…LTQGCMLCLG (62 aa). The residue at position 131 (Arg-131) is an Asymmetric dimethylarginine. The tract at residues 150–187 is disordered; sequence RAPGPPYSPVPAESESLVNGNHTPQTATRGPSACASHS. The segment covering 165–178 has biased composition (polar residues); it reads SLVNGNHTPQTATR. Ser-192, Ser-220, and Ser-223 each carry phosphoserine. Disordered stretches follow at residues 211–334 and 370–535; these read AAGK…LTDS and GALS…GSFS. Residues 252–273 are compositionally biased toward low complexity; that stretch reads SPAFSPLSSPASSGSCASHSPS. Residues 288–303 show a composition bias toward polar residues; sequence RSSSYHLALQPPQSRP. Positions 309–322 are enriched in basic and acidic residues; the sequence is ESPRLSRKGGHERP. Residues Ser-324, Ser-334, Ser-381, Ser-404, Ser-430, Ser-443, Ser-461, Ser-470, Ser-489, and Ser-501 each carry the phosphoserine modification. Low complexity predominate over residues 456–473; it reads ELPPLSPSLSRRALSPLP. The segment covering 481 to 491 has biased composition (basic and acidic residues); sequence KLNREVAESPR. Arg-512 bears the Omega-N-methylarginine mark. 2 positions are modified to phosphoserine: Ser-518 and Ser-520. Thr-522 bears the Phosphothreonine mark. Phosphoserine occurs at positions 533, 539, 551, 555, 563, 578, and 583. Over residues 653–663 the composition is skewed to low complexity; that stretch reads PSRGLAGASGR. Disordered stretches follow at residues 653 to 707, 936 to 1019, and 1119 to 1138; these read PSRG…APST, TGPA…GSLP, and SMET…DNMS. The span at 677–691 shows a compositional bias: basic and acidic residues; the sequence is ESMERSDEENLKEEC. Ser-678 is subject to Phosphoserine. Residues 683–809 adopt a coiled-coil conformation; it reads DEENLKEECS…TETKLFEDLE (127 aa). Ser-971 and Ser-1017 each carry phosphoserine. A compositionally biased stretch (low complexity) spans 971–992; sequence SPLPRTRSGPLPSSSGSSSSSS. The span at 1009-1018 shows a compositional bias: polar residues; sequence LLTQNGTGSL. Residues 1144–1208 are a coiled coil; the sequence is DMGKIEEMEK…ARRQQLVEKE (65 aa). Positions 1256–1370 constitute a PH domain; that stretch reads SKVCRGYLVK…WMDVIVTGAE (115 aa).

This is Pleckstrin homology-like domain family B member 1 (PHLDB1) from Homo sapiens (Human).